A 243-amino-acid polypeptide reads, in one-letter code: Small ribosomal subunit protein uS3 (243 aa).

A KH type-2 domain is found at 39–110 (IRTFIEKKYG…QVRINVVEVE (72 aa)). Positions 216–243 (QTIPVGANPKRKASRRPQQFEDRSNENS) are disordered. The segment covering 233-243 (QQFEDRSNENS) has biased composition (basic and acidic residues).

This sequence belongs to the universal ribosomal protein uS3 family. As to quaternary structure, part of the 30S ribosomal subunit. Forms a tight complex with proteins S10 and S14.

In terms of biological role, binds the lower part of the 30S subunit head. Binds mRNA in the 70S ribosome, positioning it for translation. This Prochlorococcus marinus (strain MIT 9215) protein is Small ribosomal subunit protein uS3.